The sequence spans 209 residues: ATP-dependent Clp protease proteolytic subunit (209 aa).

S111 serves as the catalytic Nucleophile. The active site involves H136.

This sequence belongs to the peptidase S14 family. As to quaternary structure, fourteen ClpP subunits assemble into 2 heptameric rings which stack back to back to give a disk-like structure with a central cavity, resembling the structure of eukaryotic proteasomes.

The protein localises to the cytoplasm. It catalyses the reaction Hydrolysis of proteins to small peptides in the presence of ATP and magnesium. alpha-casein is the usual test substrate. In the absence of ATP, only oligopeptides shorter than five residues are hydrolyzed (such as succinyl-Leu-Tyr-|-NHMec, and Leu-Tyr-Leu-|-Tyr-Trp, in which cleavage of the -Tyr-|-Leu- and -Tyr-|-Trp bonds also occurs).. Its function is as follows. Cleaves peptides in various proteins in a process that requires ATP hydrolysis. Has a chymotrypsin-like activity. Plays a major role in the degradation of misfolded proteins. This chain is ATP-dependent Clp protease proteolytic subunit, found in Dechloromonas aromatica (strain RCB).